The chain runs to 752 residues: Protein SEY1 homolog 1 (752 aa).

Residues 1-674 (MIKNQGDRYH…QKHKQDFLQN (674 aa)) lie on the Cytoplasmic side of the membrane. The GB1/RHD3-type G domain occupies 40 to 265 (GKKYNIVSII…YEKNVRWSDM (226 aa)). GTP is bound at residue 50–57 (GSQSTGKS). Residues 445 to 465 (NQLKSFVEAQLASFKQQLDNI) are a coiled coil. The helical transmembrane segment at 675-695 (IPKPFWFLLLFFMYDDVLRWM) threads the bilayer. At 696–698 (GNP) the chain is on the lumenal side. The chain crosses the membrane as a helical span at residues 699–719 (LFLYPILIILCFIGFCIAIGL). At 720–752 (HSLPKLAFQTVFRTINQALLPLIFGGISKLKTS) the chain is on the cytoplasmic side.

Belongs to the TRAFAC class dynamin-like GTPase superfamily. GB1/RHD3 GTPase family. RHD3 subfamily.

The protein localises to the endoplasmic reticulum membrane. Probable GTP-binding protein that may be involved in cell development. The chain is Protein SEY1 homolog 1 from Paramecium tetraurelia.